Here is a 109-residue protein sequence, read N- to C-terminus: Urocortin-2 (109 aa).

The N-terminal stretch at 1–22 (MTRWALVVFMVLMLDRVPGTPI) is a signal peptide. A propeptide spanning residues 23 to 67 (PTFQLLPQNYPETTPSSVSSESPSDTTTGPSASWSNSKASPYLDT) is cleaved from the precursor. Residues 24–60 (TFQLLPQNYPETTPSSVSSESPSDTTTGPSASWSNSK) form a disordered region. The span at 33-50 (PETTPSSVSSESPSDTTT) shows a compositional bias: low complexity. Residues 51–60 (GPSASWSNSK) are compositionally biased toward polar residues. Residue Val106 is modified to Valine amide; partial.

The protein belongs to the sauvagine/corticotropin-releasing factor/urotensin I family. As to quaternary structure, binds with high affinity to CRF receptors 2-alpha and 2-beta. In terms of processing, glycosylated.

The protein localises to the secreted. Functionally, suppresses food intake, delays gastric emptying and decreases heat-induced edema. Might represent an endogenous ligand for maintaining homeostasis after stress. The chain is Urocortin-2 (Ucn2) from Rattus norvegicus (Rat).